A 219-amino-acid polypeptide reads, in one-letter code: Mediator of RNA polymerase II transcription subunit 18 (219 aa).

This sequence belongs to the Mediator complex subunit 18 family. As to quaternary structure, component of the Mediator complex. Interacts with YY1 to suppress disease susceptibility via the repression of genes glutaredoxins GRX480, GRXS13 and thioredoxin TRX-h5. Binds to ABI4 to regulate abscisic acid responses; recruited by ABI4 to ABI5 promoter in the presence of abscisic acid (ABA). Interacts with SUF4 to regulate flowering time; recruited by SUF4 to FLC promoter.

Its subcellular location is the nucleus. Functionally, component of the Mediator complex, a coactivator involved in the regulated transcription of nearly all RNA polymerase II-dependent genes. Mediator functions as a bridge to convey information from gene-specific regulatory proteins to the basal RNA polymerase II transcription machinery. The Mediator complex, having a compact conformation in its free form, is recruited to promoters by direct interactions with regulatory proteins and serves for the assembly of a functional pre-initiation complex with RNA polymerase II and the general transcription factors. Involved in the regulation of histone H3 lysine tri-methylation (H3K36me3). Associates with the promoter, coding and terminator regions of target genes suggesting its function in transcription initiation, elongation and termination. Multifunctional protein which regulates plant immunity, especially during necrotrophic fungal infection (e.g. B.cinerea and A.brassicicola), flowering time and responses to hormones (e.g. abscisic acid ABA and ethylene) through interactions with distinct transcription factors. The sequence is that of Mediator of RNA polymerase II transcription subunit 18 from Arabidopsis thaliana (Mouse-ear cress).